The following is a 456-amino-acid chain: Endoglucanase A (456 aa).

Residues 1–30 (MSRIRRFLATALAAATAGVGAIVTAIASAG) form the signal peptide. Positions 31-322 (PAHAYDSPFY…RAYELAMNAA (292 aa)) are catalytic. The active site involves Asp-113. 2 disulfides stabilise this stretch: Cys-114-Cys-159 and Cys-267-Cys-302. Asp-151 acts as the Proton donor in catalysis. The disordered stretch occupies residues 255–280 (SRNGNGPLGSEWCDPPGRATGTWSTT). Catalysis depends on Asp-300, which acts as the Nucleophile. The segment at 321-358 (AAPPTYSPSPTPSTPSPSPSQSDPGSPSPSPSQPPAGR) is disordered. The linker ('hinge') (Pro-Ser box) stretch occupies residues 323-355 (PPTYSPSPTPSTPSPSPSQSDPGSPSPSPSQPP). Residues 325–338 (TYSPSPTPSTPSPS) are compositionally biased toward pro residues. Residues 353 to 456 (QPPAGRACEA…LSSSITCSAS (104 aa)) enclose the CBM2 domain. Cys-360 and Cys-453 form a disulfide bridge.

The protein belongs to the glycosyl hydrolase 6 (cellulase B) family.

The enzyme catalyses Endohydrolysis of (1-&gt;4)-beta-D-glucosidic linkages in cellulose, lichenin and cereal beta-D-glucans.. The sequence is that of Endoglucanase A (celA) from Thermobispora bispora (Microbispora bispora).